The following is a 262-amino-acid chain: Phosphatidylglycerol--prolipoprotein diacylglyceryl transferase (262 aa).

Transmembrane regions (helical) follow at residues 9–29 (LGPL…ILAV), 41–61 (IIPD…ILGA), 80–100 (IFAI…GALV), and 109–129 (LINT…AQSL). Position 131 (arginine 131) interacts with a 1,2-diacyl-sn-glycero-3-phospho-(1'-sn-glycerol). The next 3 membrane-spanning stretches (helical) occupy residues 167-187 (QPTF…ILIF), 197-217 (GHIT…IEGM), and 226-246 (GLRV…MIVI).

It belongs to the Lgt family.

Its subcellular location is the cell membrane. The catalysed reaction is L-cysteinyl-[prolipoprotein] + a 1,2-diacyl-sn-glycero-3-phospho-(1'-sn-glycerol) = an S-1,2-diacyl-sn-glyceryl-L-cysteinyl-[prolipoprotein] + sn-glycerol 1-phosphate + H(+). It participates in protein modification; lipoprotein biosynthesis (diacylglyceryl transfer). Functionally, catalyzes the transfer of the diacylglyceryl group from phosphatidylglycerol to the sulfhydryl group of the N-terminal cysteine of a prolipoprotein, the first step in the formation of mature lipoproteins. This is Phosphatidylglycerol--prolipoprotein diacylglyceryl transferase from Streptococcus pneumoniae (strain P1031).